A 414-amino-acid chain; its full sequence is Small ribosomal subunit protein mS46 (414 aa).

Polar residues predominate over residues 20 to 35 (LNAQQQQRPFSSTTTR). Disordered stretches follow at residues 20 to 71 (LNAQ…EAAV) and 168 to 229 (AGPG…DAPP). 2 stretches are compositionally biased toward low complexity: residues 45-59 (PAAA…APGP) and 168-200 (AGPG…PFGA). Basic and acidic residues predominate over residues 205–224 (PAGDKKRSGGSGDKRPRGDD).

The protein belongs to the mitochondrion-specific ribosomal protein mS46 family. As to quaternary structure, component of the mitochondrial small ribosomal subunit (mt-SSU). Mature N.crassa 74S mitochondrial ribosomes consist of a small (37S) and a large (54S) subunit. The 37S small subunit contains a 16S ribosomal RNA (16S mt-rRNA) and 32 different proteins. The 54S large subunit contains a 23S rRNA (23S mt-rRNA) and 42 different proteins.

Its subcellular location is the mitochondrion. Its function is as follows. Component of the mitochondrial ribosome (mitoribosome), a dedicated translation machinery responsible for the synthesis of mitochondrial genome-encoded proteins, including at least some of the essential transmembrane subunits of the mitochondrial respiratory chain. The mitoribosomes are attached to the mitochondrial inner membrane and translation products are cotranslationally integrated into the membrane. This is Small ribosomal subunit protein mS46 (rsm28) from Neurospora crassa (strain ATCC 24698 / 74-OR23-1A / CBS 708.71 / DSM 1257 / FGSC 987).